The chain runs to 119 residues: NAD(P)H-quinone oxidoreductase subunit M (119 aa).

The protein belongs to the complex I NdhM subunit family. As to quaternary structure, NDH-1 can be composed of about 15 different subunits; different subcomplexes with different compositions have been identified which probably have different functions.

Its subcellular location is the cellular thylakoid membrane. It carries out the reaction a plastoquinone + NADH + (n+1) H(+)(in) = a plastoquinol + NAD(+) + n H(+)(out). The catalysed reaction is a plastoquinone + NADPH + (n+1) H(+)(in) = a plastoquinol + NADP(+) + n H(+)(out). Functionally, NDH-1 shuttles electrons from an unknown electron donor, via FMN and iron-sulfur (Fe-S) centers, to quinones in the respiratory and/or the photosynthetic chain. The immediate electron acceptor for the enzyme in this species is believed to be plastoquinone. Couples the redox reaction to proton translocation, and thus conserves the redox energy in a proton gradient. Cyanobacterial NDH-1 also plays a role in inorganic carbon-concentration. The sequence is that of NAD(P)H-quinone oxidoreductase subunit M from Gloeothece citriformis (strain PCC 7424) (Cyanothece sp. (strain PCC 7424)).